Reading from the N-terminus, the 468-residue chain is MTQEKWGLLCQKLLKTVGQNNFTTWIEPLEFQALENGVAVFTVPTNFMGNYVSQNFSDLILYELNNAGEAVQRLAFRVAANSPMRPARAARPAAAAAAAAAAVEAPQVSAPRATDTSDVLDGLQAAPLDPRFTFDSFVVGKPNELAHAAARRVSEGGPVTFNPLVLYGGVGLGKTHLMHAIAWELKVKRPELNVLYLSAEQFMYRFVQALRERRMMDFKHLFRSVDVLMVDDVQFIAGKDSTQEEFFHTFNALVDQNKQIIISADRAPGEIKDLEDRVKSRLQCGLVVDLHPTDYELRLGILQTKVQMYRTTYPDLVIADGVLEFLAHRISTNVRVLEGALTRLFAFASLVGREIDMELTQDCLADVLRASERKITVEEIQRKVSDYYNIRLSDIIGPKRLRSYARPRQVAMYLCKQLTSRSLPEIGRRFGGRDHTTVMHGVKRIEELKLTDGQIAEDVEMLRRALEA.

Residues 1-90 (MTQEKWGLLC…NSPMRPARAA (90 aa)) are domain I, interacts with DnaA modulators. Positions 91–126 (RPAAAAAAAAAAVEAPQVSAPRATDTSDVLDGLQAA) are domain II. A domain III, AAA+ region region spans residues 127-348 (PLDPRFTFDS…GALTRLFAFA (222 aa)). Residues Gly-171, Gly-173, Lys-174, and Thr-175 each coordinate ATP. The segment at 349-468 (SLVGREIDME…VEMLRRALEA (120 aa)) is domain IV, binds dsDNA.

The protein belongs to the DnaA family. In terms of assembly, oligomerizes as a right-handed, spiral filament on DNA at oriC.

It is found in the cytoplasm. In terms of biological role, plays an essential role in the initiation and regulation of chromosomal replication. ATP-DnaA binds to the origin of replication (oriC) to initiate formation of the DNA replication initiation complex once per cell cycle. Binds the DnaA box (a 9 base pair repeat at the origin) and separates the double-stranded (ds)DNA. Forms a right-handed helical filament on oriC DNA; dsDNA binds to the exterior of the filament while single-stranded (ss)DNA is stabiized in the filament's interior. The ATP-DnaA-oriC complex binds and stabilizes one strand of the AT-rich DNA unwinding element (DUE), permitting loading of DNA polymerase. After initiation quickly degrades to an ADP-DnaA complex that is not apt for DNA replication. Binds acidic phospholipids. This Ruegeria pomeroyi (strain ATCC 700808 / DSM 15171 / DSS-3) (Silicibacter pomeroyi) protein is Chromosomal replication initiator protein DnaA.